We begin with the raw amino-acid sequence, 137 residues long: Large ribosomal subunit protein uL16 (137 aa).

This sequence belongs to the universal ribosomal protein uL16 family. As to quaternary structure, part of the 50S ribosomal subunit.

In terms of biological role, binds 23S rRNA and is also seen to make contacts with the A and possibly P site tRNAs. This chain is Large ribosomal subunit protein uL16, found in Oleidesulfovibrio alaskensis (strain ATCC BAA-1058 / DSM 17464 / G20) (Desulfovibrio alaskensis).